Reading from the N-terminus, the 119-residue chain is cAMP-responsive element-binding protein-like 2 (119 aa).

Residues 1 to 23 (MDDSKIVAGKVKKPGKRGRKPAK) form a disordered region. Residues 10 to 21 (KVKKPGKRGRKP) are compositionally biased toward basic residues. The region spanning 23–86 (KIDLKAKLER…LAMDQGKIPS (64 aa)) is the bZIP domain. The interval 29 to 60 (KLERSRQSARECRARKKLRYQYLEELVSSKER) is basic motif. Residues 62-69 (ICALREEL) form a leucine-zipper region. Residues 95–119 (DEQKTPQSCSNKTTKNSKYSSSSGI) form a disordered region. A compositionally biased stretch (low complexity) spans 102–119 (SCSNKTTKNSKYSSSSGI).

Belongs to the bZIP family. ATF subfamily.

The protein localises to the nucleus. Probable regulator of creb1 transcriptional activity which is involved in adipose cells differentiation. May also play a regulatory role in the cell cycle. The protein is cAMP-responsive element-binding protein-like 2 (crebl2) of Danio rerio (Zebrafish).